A 722-amino-acid chain; its full sequence is Dipeptidyl aminopeptidase BII (722 aa).

A signal peptide spans 1-24 (MRPNLLAAAIAVPLSLLAAQIAQA). 2 cysteine pairs are disulfide-bonded: Cys-70-Cys-87 and Cys-166-Cys-174. His-86 (charge relay system) is an active-site residue. 215–216 (NW) serves as a coordination point for substrate. Asp-224 acts as the Charge relay system in catalysis. Substrate-binding positions include Asn-330, 655–657 (GNS), and 673–674 (FD). The active-site Charge relay system is the Ser-657.

It belongs to the peptidase S46 family. In terms of assembly, homodimer.

With respect to regulation, completely inhibited by the serine protease inhibitor diisopropyl fluorophosphate (DFP) and potently inhibited by 0.5 mM ZnCl(2), 10 mM o-phenanthlorine, phenylmethanesulfonyl fluoride (PMSF) and N-tosyl-L-phenyl-alanyl chloromethyl ketone (TPCK), but not by N-tosyl-L-lysyl chloromethyl ketone (TLCK). Activity is not affected significantly by protease inhibitors, such as chymostatin, leupeptin, N-ethylmaleimide (NEM), iodoacetate (IAA), L-trans-epoxysuccinyl-leucylamido(4-guanido)butane (E64) and pepstatin A or by CoCl(2), CaCl(2) and EDTA. In terms of biological role, exopeptidase that catalyzes the removal of dipeptide units (NH2-P2-P1-) from the free amino termini of oligopeptides and small proteins. Peptide digestion is sequential and substrate recognition is non-specific, with the exception that Pro is not suitable as a P1 residue. Removes many residues of bioactive oligopeptides such as angiotensin I and neuromedin N and also cleaves oxidized insulin B chain. Able to hydrolyze an X-Pro bond, an imido bond. No endopeptidase activity. May play a physiological role in feeding. The polypeptide is Dipeptidyl aminopeptidase BII (Pseudoxanthomonas mexicana).